We begin with the raw amino-acid sequence, 588 residues long: Autophagy-related protein 22-1 (588 aa).

A helical membrane pass occupies residues Tyr-35–Leu-55. Residue Asn-84 is glycosylated (N-linked (GlcNAc...) asparagine). A run of 3 helical transmembrane segments spans residues Thr-109–Ile-129, Leu-144–Pro-164, and Leu-168–Leu-188. Asn-255 carries an N-linked (GlcNAc...) asparagine glycan. A run of 8 helical transmembrane segments spans residues Gly-270 to Val-290, Leu-301 to Leu-321, Ile-365 to Thr-385, Ala-399 to Trp-419, Ile-434 to Pro-454, Phe-471 to Gly-493, Leu-507 to Thr-527, and Ala-536 to Ala-556.

The protein belongs to the ATG22 family.

It is found in the vacuole membrane. Its function is as follows. Vacuolar effluxer which mediate the efflux of amino acids resulting from autophagic degradation. The release of autophagic amino acids allows the maintenance of protein synthesis and viability during nitrogen starvation. This is Autophagy-related protein 22-1 (atg22-1) from Emericella nidulans (strain FGSC A4 / ATCC 38163 / CBS 112.46 / NRRL 194 / M139) (Aspergillus nidulans).